We begin with the raw amino-acid sequence, 275 residues long: 4-hydroxy-3-methylbut-2-enyl diphosphate reductase (275 aa).

[4Fe-4S] cluster is bound at residue Cys-12. (2E)-4-hydroxy-3-methylbut-2-enyl diphosphate contacts are provided by His-40 and His-70. 2 residues coordinate dimethylallyl diphosphate: His-40 and His-70. Isopentenyl diphosphate is bound by residues His-40 and His-70. A [4Fe-4S] cluster-binding site is contributed by Cys-92. His-119 contributes to the (2E)-4-hydroxy-3-methylbut-2-enyl diphosphate binding site. Position 119 (His-119) interacts with dimethylallyl diphosphate. His-119 lines the isopentenyl diphosphate pocket. The Proton donor role is filled by Glu-121. A (2E)-4-hydroxy-3-methylbut-2-enyl diphosphate-binding site is contributed by Thr-151. [4Fe-4S] cluster is bound at residue Cys-181. Positions 209, 210, 211, and 251 each coordinate (2E)-4-hydroxy-3-methylbut-2-enyl diphosphate. Dimethylallyl diphosphate-binding residues include Ser-209, Ser-210, Asn-211, and Ser-251. Isopentenyl diphosphate is bound by residues Ser-209, Ser-210, Asn-211, and Ser-251.

Belongs to the IspH family. It depends on [4Fe-4S] cluster as a cofactor.

The enzyme catalyses isopentenyl diphosphate + 2 oxidized [2Fe-2S]-[ferredoxin] + H2O = (2E)-4-hydroxy-3-methylbut-2-enyl diphosphate + 2 reduced [2Fe-2S]-[ferredoxin] + 2 H(+). The catalysed reaction is dimethylallyl diphosphate + 2 oxidized [2Fe-2S]-[ferredoxin] + H2O = (2E)-4-hydroxy-3-methylbut-2-enyl diphosphate + 2 reduced [2Fe-2S]-[ferredoxin] + 2 H(+). The protein operates within isoprenoid biosynthesis; dimethylallyl diphosphate biosynthesis; dimethylallyl diphosphate from (2E)-4-hydroxy-3-methylbutenyl diphosphate: step 1/1. It functions in the pathway isoprenoid biosynthesis; isopentenyl diphosphate biosynthesis via DXP pathway; isopentenyl diphosphate from 1-deoxy-D-xylulose 5-phosphate: step 6/6. Catalyzes the conversion of 1-hydroxy-2-methyl-2-(E)-butenyl 4-diphosphate (HMBPP) into a mixture of isopentenyl diphosphate (IPP) and dimethylallyl diphosphate (DMAPP). Acts in the terminal step of the DOXP/MEP pathway for isoprenoid precursor biosynthesis. The chain is 4-hydroxy-3-methylbut-2-enyl diphosphate reductase from Thermotoga sp. (strain RQ2).